Here is a 113-residue protein sequence, read N- to C-terminus: DNA-directed RNA polymerase subunit omega (113 aa).

This sequence belongs to the RNA polymerase subunit omega family. As to quaternary structure, the RNAP catalytic core consists of 2 alpha, 1 beta, 1 beta' and 1 omega subunit. When a sigma factor is associated with the core the holoenzyme is formed, which can initiate transcription.

It carries out the reaction RNA(n) + a ribonucleoside 5'-triphosphate = RNA(n+1) + diphosphate. Promotes RNA polymerase assembly. Latches the N- and C-terminal regions of the beta' subunit thereby facilitating its interaction with the beta and alpha subunits. The polypeptide is DNA-directed RNA polymerase subunit omega (Rhizorhabdus wittichii (strain DSM 6014 / CCUG 31198 / JCM 15750 / NBRC 105917 / EY 4224 / RW1) (Sphingomonas wittichii)).